Reading from the N-terminus, the 193-residue chain is Histone H5 (193 aa).

Residues 1–11 (TDSPIPAPAPA) are compositionally biased toward pro residues. Disordered regions lie at residues 1 to 29 (TDSP…HPTY) and 80 to 193 (GVLK…PKKK). Basic residues predominate over residues 13–24 (KPKRARAPRKPA). In terms of domain architecture, H15 spans 25–98 (SHPTYSEMIA…GASGSFRLAK (74 aa)). The segment covering 104-193 (RSPAGRKKKK…SGARKSPKKK (90 aa)) has biased composition (basic residues).

This sequence belongs to the histone H1/H5 family. Erythroid cells.

Its subcellular location is the nucleus. It is found in the chromosome. Histone H5 performs the same function as H1, being necessary for the condensation of nucleosome chains into higher order structures, and replaces histone H1 in certain cells. In Anser anser anser (Western greylag goose), this protein is Histone H5.